We begin with the raw amino-acid sequence, 390 residues long: Ribosomal RNA large subunit methyltransferase G (390 aa).

This sequence belongs to the methyltransferase superfamily. RlmG family.

The protein localises to the cytoplasm. It catalyses the reaction guanosine(1835) in 23S rRNA + S-adenosyl-L-methionine = N(2)-methylguanosine(1835) in 23S rRNA + S-adenosyl-L-homocysteine + H(+). Specifically methylates the guanine in position 1835 (m2G1835) of 23S rRNA. In Alcanivorax borkumensis (strain ATCC 700651 / DSM 11573 / NCIMB 13689 / SK2), this protein is Ribosomal RNA large subunit methyltransferase G.